We begin with the raw amino-acid sequence, 200 residues long: LexA repressor (200 aa).

The segment at residues 28 to 48 (RAEIARILGFKSANAAEEHIK) is a DNA-binding region (H-T-H motif). Catalysis depends on for autocatalytic cleavage activity residues Ser-118 and Lys-155.

It belongs to the peptidase S24 family. Homodimer.

The enzyme catalyses Hydrolysis of Ala-|-Gly bond in repressor LexA.. In terms of biological role, represses a number of genes involved in the response to DNA damage (SOS response), including recA and lexA. In the presence of single-stranded DNA, RecA interacts with LexA causing an autocatalytic cleavage which disrupts the DNA-binding part of LexA, leading to derepression of the SOS regulon and eventually DNA repair. In Cellvibrio japonicus (strain Ueda107) (Pseudomonas fluorescens subsp. cellulosa), this protein is LexA repressor.